A 215-amino-acid chain; its full sequence is Ribosomal RNA small subunit methyltransferase G (215 aa).

Residues Gly78, Leu83, 128–129 (AE), and Arg146 contribute to the S-adenosyl-L-methionine site.

Belongs to the methyltransferase superfamily. RNA methyltransferase RsmG family.

It is found in the cytoplasm. The enzyme catalyses guanosine(527) in 16S rRNA + S-adenosyl-L-methionine = N(7)-methylguanosine(527) in 16S rRNA + S-adenosyl-L-homocysteine. Its function is as follows. Specifically methylates the N7 position of guanine in position 527 of 16S rRNA. This is Ribosomal RNA small subunit methyltransferase G from Anaeromyxobacter dehalogenans (strain 2CP-1 / ATCC BAA-258).